A 490-amino-acid polypeptide reads, in one-letter code: Cytochrome P450 2C50 (490 aa).

Ser127 carries the post-translational modification Phosphoserine. N6-acetyllysine occurs at positions 249 and 375. Cys435 contacts heme.

It belongs to the cytochrome P450 family. Heme is required as a cofactor. As to expression, expressed in heart and liver.

It localises to the endoplasmic reticulum membrane. The protein localises to the microsome membrane. It carries out the reaction an organic molecule + reduced [NADPH--hemoprotein reductase] + O2 = an alcohol + oxidized [NADPH--hemoprotein reductase] + H2O + H(+). Metabolizes arachidonic acid to several midchain and omega-terminal hydroxyeicosatetraenoic acids (HETE). This is Cytochrome P450 2C50 from Mus musculus (Mouse).